A 1212-amino-acid polypeptide reads, in one-letter code: Nucleolar protein 6 (1212 aa).

Disordered regions lie at residues 1-72 (MGKI…PVSI) and 1156-1212 (KREQ…KSLS). Residues 1197 to 1212 (LKRKSLIKSRPLKSLS) are compositionally biased toward basic residues.

This sequence belongs to the NRAP family. Part of the small subunit (SSU) processome, composed of more than 70 proteins and the RNA chaperone small nucleolar RNA (snoRNA) U3.

Its subcellular location is the nucleus. It localises to the nucleolus. The protein localises to the chromosome. In terms of biological role, part of the small subunit (SSU) processome, first precursor of the small eukaryotic ribosomal subunit. During the assembly of the SSU processome in the nucleolus, many ribosome biogenesis factors, an RNA chaperone and ribosomal proteins associate with the nascent pre-rRNA and work in concert to generate RNA folding, modifications, rearrangements and cleavage as well as targeted degradation of pre-ribosomal RNA by the RNA exosome. This Drosophila pseudoobscura pseudoobscura (Fruit fly) protein is Nucleolar protein 6.